The chain runs to 189 residues: uncharacterized protein (189 aa).

The protein to M.jannaschii MJ1461.

This is an uncharacterized protein from Methanocaldococcus jannaschii (strain ATCC 43067 / DSM 2661 / JAL-1 / JCM 10045 / NBRC 100440) (Methanococcus jannaschii).